The primary structure comprises 439 residues: ATP-dependent RNA helicase RhlB (439 aa).

Residues 9–37 carry the Q motif motif; that stretch reads QKFADLPLHPEVKQALAENGFEFCTPIQA. A Helicase ATP-binding domain is found at 40-219; the sequence is LPVLLQSKDI…YDHMNEPVKV (180 aa). 53–60 provides a ligand contact to ATP; sequence AQTGTGKT. Positions 165–168 match the DEAD box motif; that stretch reads DEAD. The Helicase C-terminal domain occupies 243–390; sequence KMRLLLTLIE…VSNYDRDALL (148 aa). The interval 395–439 is disordered; that stretch reads PPVKIHRRHPAGARNLRERSGAGRPQGAHRSGGRPPRHDRTRRQP. Positions 425–439 are enriched in basic residues; that stretch reads SGGRPPRHDRTRRQP.

It belongs to the DEAD box helicase family. RhlB subfamily. Component of the RNA degradosome, which is a multiprotein complex involved in RNA processing and mRNA degradation.

It is found in the cytoplasm. The catalysed reaction is ATP + H2O = ADP + phosphate + H(+). Its function is as follows. DEAD-box RNA helicase involved in RNA degradation. Has RNA-dependent ATPase activity and unwinds double-stranded RNA. The sequence is that of ATP-dependent RNA helicase RhlB from Shewanella sp. (strain ANA-3).